Here is a 255-residue protein sequence, read N- to C-terminus: Cyclic di-GMP phosphodiesterase PdeH (255 aa).

Residues 13 to 255 (EASIESLQER…ETLNTAVLAL (243 aa)) enclose the EAL domain.

It catalyses the reaction 3',3'-c-di-GMP + H2O = 5'-phosphoguanylyl(3'-&gt;5')guanosine + H(+). In terms of biological role, involved in the control of the switch from cell motility to adhesion via regulation of cellular levels of cyclic-di-GMP (c-di-GMP). Part of a signaling cascade that regulates curli biosynthesis. The cascade is composed of two c-di-GMP control modules, in which c-di-GMP controlled by the DgcE/PdeH pair (module I) regulates the activity of the DgcM/PdeR pair (module II), which in turn regulates activity of the transcription factor MlrA and expression of the master biofilm regulator csgD. Effect on flagella is controlled via the c-di-GMP-binding flagellar brake protein YcgR. This chain is Cyclic di-GMP phosphodiesterase PdeH, found in Escherichia coli (strain K12).